The primary structure comprises 610 residues: Glutamine--fructose-6-phosphate aminotransferase [isomerizing] (610 aa).

C2 serves as the catalytic Nucleophile; for GATase activity. In terms of domain architecture, Glutamine amidotransferase type-2 spans C2–A221. 2 SIS domains span residues A286–R426 and W459–P600. Catalysis depends on K605, which acts as the For Fru-6P isomerization activity.

In terms of assembly, homodimer.

The protein localises to the cytoplasm. It catalyses the reaction D-fructose 6-phosphate + L-glutamine = D-glucosamine 6-phosphate + L-glutamate. Its function is as follows. Catalyzes the first step in hexosamine metabolism, converting fructose-6P into glucosamine-6P using glutamine as a nitrogen source. The protein is Glutamine--fructose-6-phosphate aminotransferase [isomerizing] of Bordetella bronchiseptica (strain ATCC BAA-588 / NCTC 13252 / RB50) (Alcaligenes bronchisepticus).